The primary structure comprises 464 residues: ATP synthase subunit beta (464 aa).

152–159 (GGAGVGKT) is a binding site for ATP.

The protein belongs to the ATPase alpha/beta chains family. F-type ATPases have 2 components, CF(1) - the catalytic core - and CF(0) - the membrane proton channel. CF(1) has five subunits: alpha(3), beta(3), gamma(1), delta(1), epsilon(1). CF(0) has three main subunits: a(1), b(2) and c(9-12). The alpha and beta chains form an alternating ring which encloses part of the gamma chain. CF(1) is attached to CF(0) by a central stalk formed by the gamma and epsilon chains, while a peripheral stalk is formed by the delta and b chains.

It localises to the cell inner membrane. It catalyses the reaction ATP + H2O + 4 H(+)(in) = ADP + phosphate + 5 H(+)(out). Functionally, produces ATP from ADP in the presence of a proton gradient across the membrane. The catalytic sites are hosted primarily by the beta subunits. The protein is ATP synthase subunit beta of Aliarcobacter butzleri (strain RM4018) (Arcobacter butzleri).